Consider the following 237-residue polypeptide: Uridylate kinase (237 aa).

12–15 (KLSG) is a binding site for ATP. The segment at 20-25 (GEDGLG) is involved in allosteric activation by GTP. Residue glycine 54 coordinates UMP. Residues glycine 55 and arginine 59 each contribute to the ATP site. Residues aspartate 74 and 135–142 (TGNPFFTT) each bind UMP. ATP contacts are provided by threonine 162, tyrosine 168, and aspartate 171.

Belongs to the UMP kinase family. In terms of assembly, homohexamer.

It is found in the cytoplasm. It carries out the reaction UMP + ATP = UDP + ADP. It participates in pyrimidine metabolism; CTP biosynthesis via de novo pathway; UDP from UMP (UMPK route): step 1/1. Its activity is regulated as follows. Allosterically activated by GTP. Inhibited by UTP. Functionally, catalyzes the reversible phosphorylation of UMP to UDP. The protein is Uridylate kinase of Haemophilus influenzae (strain 86-028NP).